Here is a 100-residue protein sequence, read N- to C-terminus: Small ribosomal subunit protein uS14 (100 aa).

Belongs to the universal ribosomal protein uS14 family. Part of the 30S ribosomal subunit. Contacts proteins S3 and S10.

Its function is as follows. Binds 16S rRNA, required for the assembly of 30S particles and may also be responsible for determining the conformation of the 16S rRNA at the A site. The polypeptide is Small ribosomal subunit protein uS14 (Prochlorococcus marinus (strain NATL2A)).